A 1080-amino-acid polypeptide reads, in one-letter code: Myocardin-related transcription factor B (1080 aa).

Residues 40–65 (EVLQLRLQQRRTREQLVDQGIMPPLK) form an RPEL 1 repeat. At serine 66 the chain carries Phosphoserine. 2 RPEL repeats span residues 84–109 (NFLK…EETF) and 128–153 (DDLN…PVDS). 4 disordered regions span residues 170–222 (THGE…AQFT), 234–311 (TPLT…EPQM), 352–384 (PIKT…SSLD), and 477–501 (PHVE…LSTD). 2 stretches are compositionally biased toward polar residues: residues 188–200 (QPAS…SAAS) and 240–259 (QPPT…SSAK). The span at 272-287 (NPNDKHRSKKCKDPKP) shows a compositional bias: basic and acidic residues. The segment covering 358–370 (NSSSGSNSGSSSS) has biased composition (low complexity). Positions 383-417 (LDDLKVSELKTELKLRGLPVSGTKPDLIERLKPYQ) constitute an SAP domain. Phosphoserine is present on residues serine 531, serine 535, and serine 537. A coiled-coil region spans residues 539 to 594 (SSSTLSTLELDAAEKDRKLQEKEKQIEELKRKLEQEQKLVEVLKMQLEVEKRGQQR). The required for interaction with itself and with MRTFA stretch occupies residues 557 to 585 (LQEKEKQIEELKRKLEQEQKLVEVLKMQL). Disordered stretches follow at residues 588 to 646 (EKRG…SVGQ) and 794 to 846 (LQYQ…PQQF). The segment covering 595 to 606 (PPDPQPSDPPHP) has biased composition (pro residues). Lysine 622 is covalently cross-linked (Glycyl lysine isopeptide (Lys-Gly) (interchain with G-Cter in SUMO1)). Residues 794–821 (LQYQRQPGPTNQQPFVSKTSNPALQSRT) show a composition bias toward polar residues. Position 913 is a phosphoserine (serine 913). A disordered region spans residues 969–988 (GTLPSATDTGPLQNSSEDRE). Residues 972 to 983 (PSATDTGPLQNS) show a composition bias toward polar residues.

In terms of assembly, interacts with MRTFA and SRF. Post-translationally, O-glycosylated. In terms of tissue distribution, widely expressed. High expression in heart, brain and testis. Lower expression in lung, liver and kidney.

It localises to the nucleus. Functionally, acts as a transcriptional coactivator of serum response factor (SRF). Required for skeletal myogenic differentiation. This is Myocardin-related transcription factor B (Mrtfb) from Mus musculus (Mouse).